The following is a 342-amino-acid chain: Succinylglutamate desuccinylase (342 aa).

Zn(2+) is bound by residues H63, E66, and H155. Residue E219 is part of the active site.

This sequence belongs to the AspA/AstE family. Succinylglutamate desuccinylase subfamily. Requires Zn(2+) as cofactor.

The catalysed reaction is N-succinyl-L-glutamate + H2O = L-glutamate + succinate. It functions in the pathway amino-acid degradation; L-arginine degradation via AST pathway; L-glutamate and succinate from L-arginine: step 5/5. Its function is as follows. Transforms N(2)-succinylglutamate into succinate and glutamate. The sequence is that of Succinylglutamate desuccinylase from Vibrio vulnificus (strain CMCP6).